The primary structure comprises 311 residues: MYKQGEPNLWTGRLDSETDPKKFRHFQTVTFEDLSKLEKSSRPSGVGILGYAVDEGVALNKGRIGAKEGPDAIKQAFAGLPDLNQCEALVDYGNVYHDHEELIDTQKEFAMLAAKSIANHRQTFLLGGGHDIAYAQYLATRKVYPTQSIGVINIDAHFDTRAEQQSTSGTSFRQILEEDENTDYLVLGIAQGGNTQSLFDYAKEKKIDYVFADELLSHVSPTIKDMIERFVHEHDVIMFTICMDVIDSAFAPGVSAPAVLGLYPHTVLELAKRIIPSDKVSSVSIAEMNPTYDADNRTAKLVANLVHHFLK.

Positions 130, 155, 157, 159, 242, and 244 each coordinate Mn(2+).

This sequence belongs to the arginase family. The cofactor is Mn(2+).

The enzyme catalyses N-formimidoyl-L-glutamate + H2O = formamide + L-glutamate. It participates in amino-acid degradation; L-histidine degradation into L-glutamate; L-glutamate from N-formimidoyl-L-glutamate (hydrolase route): step 1/1. Functionally, catalyzes the conversion of N-formimidoyl-L-glutamate to L-glutamate and formamide. The polypeptide is Formimidoylglutamase (Staphylococcus aureus (strain bovine RF122 / ET3-1)).